A 128-amino-acid chain; its full sequence is Probable 4-amino-4-deoxy-L-arabinose-phosphoundecaprenol flippase subunit ArnF (128 aa).

At 1–2 the chain is on the cytoplasmic side; that stretch reads MG. The helical transmembrane segment at 3–23 threads the bilayer; sequence LIWGLFSVIIASVAQLSLGFA. The Periplasmic portion of the chain corresponds to 24–35; that stretch reads ASHLPPMTHLWD. A helical membrane pass occupies residues 36–56; that stretch reads FIAALLAFGLDARILLLGLLG. Residues 57 to 76 are Cytoplasmic-facing; it reads YLLSVFCWYKTLHKLALSKA. A helical transmembrane segment spans residues 77 to 97; sequence YALLSMSYVLVWIASMVLPGW. Over 98 to 100 the chain is Periplasmic; that stretch reads EGT. The chain crosses the membrane as a helical span at residues 101–121; it reads FSLKALLGVACIMSGLMLIFL. Residues 122 to 128 are Cytoplasmic-facing; it reads PMTKQRY.

It belongs to the ArnF family. As to quaternary structure, heterodimer of ArnE and ArnF.

Its subcellular location is the cell inner membrane. The protein operates within bacterial outer membrane biogenesis; lipopolysaccharide biosynthesis. In terms of biological role, translocates 4-amino-4-deoxy-L-arabinose-phosphoundecaprenol (alpha-L-Ara4N-phosphoundecaprenol) from the cytoplasmic to the periplasmic side of the inner membrane. This chain is Probable 4-amino-4-deoxy-L-arabinose-phosphoundecaprenol flippase subunit ArnF, found in Escherichia coli O9:H4 (strain HS).